Here is a 95-residue protein sequence, read N- to C-terminus: Small ribosomal subunit protein bS6 (95 aa).

Belongs to the bacterial ribosomal protein bS6 family.

Functionally, binds together with bS18 to 16S ribosomal RNA. In Symbiobacterium thermophilum (strain DSM 24528 / JCM 14929 / IAM 14863 / T), this protein is Small ribosomal subunit protein bS6.